The chain runs to 83 residues: Omega-agatoxin-Aa4b (83 aa).

An N-terminal signal peptide occupies residues M1–A20. Positions T21 to R35 are excised as a propeptide. 4 cysteine pairs are disulfide-bonded: C39–C55, C47–C60, C54–C71, and C62–C69. S81 is subject to D-serine (Ser).

Belongs to the neurotoxin 02 (plectoxin) family. 03 (omega-agtx) subfamily. In terms of processing, the toxin with D-Ser (named omega-aga IVC) is 80-90 fold more potent than that with L-Ser (omega-aga IVB) against Cav2.1/CACNA1A (P-type) channels in rat cerebellar Purkinje neurons and is more resistant to proteases. The epimerization is done by the venom peptide isomerase heterodimer. In terms of tissue distribution, expressed by the venom gland.

Its subcellular location is the secreted. Functionally, antagonist of voltage-gated Cav2.1/CACNA1A (P-type) calcium channels. Paralyzes insect by blocking neuromuscular transmission. This is Omega-agatoxin-Aa4b from Agelenopsis aperta (North American funnel-web spider).